Consider the following 660-residue polypeptide: Bifunctional polymyxin resistance protein ArnA (660 aa).

Residues 1–304 (MKAVIFAYHD…TLGLVAGARL (304 aa)) form a formyltransferase ArnAFT region. Catalysis depends on histidine 104, which acts as the Proton donor; for formyltransferase activity. (6R)-10-formyltetrahydrofolate is bound by residues arginine 114 and 136-140 (VKRAD). The interval 314–660 (RRIRVLILGV…RSVDVAERAS (347 aa)) is dehydrogenase ArnADH. NAD(+)-binding positions include aspartate 347 and 368-369 (DI). UDP-alpha-D-glucuronate is bound by residues alanine 393, tyrosine 398, and 432 to 433 (TS). Glutamate 434 acts as the Proton acceptor; for decarboxylase activity in catalysis. Residues arginine 460, asparagine 492, 526 to 535 (KLIDGGQQKR), and tyrosine 613 each bind UDP-alpha-D-glucuronate. Catalysis depends on arginine 619, which acts as the Proton donor; for decarboxylase activity.

It in the N-terminal section; belongs to the Fmt family. UDP-L-Ara4N formyltransferase subfamily. The protein in the C-terminal section; belongs to the NAD(P)-dependent epimerase/dehydratase family. UDP-glucuronic acid decarboxylase subfamily. As to quaternary structure, homohexamer, formed by a dimer of trimers.

It carries out the reaction UDP-alpha-D-glucuronate + NAD(+) = UDP-beta-L-threo-pentopyranos-4-ulose + CO2 + NADH. The enzyme catalyses UDP-4-amino-4-deoxy-beta-L-arabinose + (6R)-10-formyltetrahydrofolate = UDP-4-deoxy-4-formamido-beta-L-arabinose + (6S)-5,6,7,8-tetrahydrofolate + H(+). It functions in the pathway nucleotide-sugar biosynthesis; UDP-4-deoxy-4-formamido-beta-L-arabinose biosynthesis; UDP-4-deoxy-4-formamido-beta-L-arabinose from UDP-alpha-D-glucuronate: step 1/3. It participates in nucleotide-sugar biosynthesis; UDP-4-deoxy-4-formamido-beta-L-arabinose biosynthesis; UDP-4-deoxy-4-formamido-beta-L-arabinose from UDP-alpha-D-glucuronate: step 3/3. Its pathway is bacterial outer membrane biogenesis; lipopolysaccharide biosynthesis. In terms of biological role, bifunctional enzyme that catalyzes the oxidative decarboxylation of UDP-glucuronic acid (UDP-GlcUA) to UDP-4-keto-arabinose (UDP-Ara4O) and the addition of a formyl group to UDP-4-amino-4-deoxy-L-arabinose (UDP-L-Ara4N) to form UDP-L-4-formamido-arabinose (UDP-L-Ara4FN). The modified arabinose is attached to lipid A and is required for resistance to polymyxin and cationic antimicrobial peptides. In Salmonella paratyphi B (strain ATCC BAA-1250 / SPB7), this protein is Bifunctional polymyxin resistance protein ArnA.